A 780-amino-acid chain; its full sequence is GATOR2 complex protein WDR24 (780 aa).

6 WD repeats span residues 67–107 (SLNF…RNKQ), 113–153 (EHKR…SVST), 156–196 (GQSE…RCER), 200–240 (AHNG…AKEI), 244–286 (QTIA…IPFA), and 290–333 (EHKD…IDRA). The C4-type zinc finger occupies 708-730 (NCSNCKRPMSNKGWICDRCRQCA). Residues Cys709, Cys712, Cys723, Cys726, Cys733, Cys736, Cys747, Cys750, His752, His755, His758, Cys769, Cys773, His775, and Cys777 each contribute to the Zn(2+) site. Residues 731–780 (SMCAVCHHVVKGLFVWCQGCCHGGHLQHIMNWMQNNCYCPAGCGHVCEYS) form an RING-type; atypical zinc finger.

It belongs to the WD repeat WDR24 family. As to quaternary structure, component of the GATOR2 subcomplex, composed of MIOS, SEC13, SEH1L, WDR24 and WDR59. The GATOR2 complex interacts with CASTOR1 and CASTOR2; the interaction is negatively regulated by arginine. The GATOR2 complex interacts with SESN1, SESN2 and SESN3; the interaction is negatively regulated by amino acids.

The protein resides in the lysosome membrane. It catalyses the reaction S-ubiquitinyl-[E2 ubiquitin-conjugating enzyme]-L-cysteine + [acceptor protein]-L-lysine = [E2 ubiquitin-conjugating enzyme]-L-cysteine + N(6)-ubiquitinyl-[acceptor protein]-L-lysine.. It participates in protein modification; protein ubiquitination. Its activity is regulated as follows. The GATOR2 complex is negatively regulated by the upstream amino acid sensors CASTOR1 and SESN2, which sequester the GATOR2 complex in absence of amino acids. In the presence of abundant amino acids, GATOR2 is released from CASTOR1 and SESN2 and activated. Functionally, catalytic component of the GATOR2 complex, a multiprotein complex that acts as an activator of the amino acid-sensing branch of the mTORC1 signaling pathway. The GATOR2 complex indirectly activates mTORC1 through the inhibition of the GATOR1 subcomplex. GATOR2 probably acts as an E3 ubiquitin-protein ligase toward GATOR1. In the presence of abundant amino acids, the GATOR2 complex mediates ubiquitination of the NPRL2 core component of the GATOR1 complex, leading to GATOR1 inactivation. In the absence of amino acids, GATOR2 is inhibited, activating the GATOR1 complex. In addition to its role in regulation of the mTORC1 complex, promotes the acidification of lysosomes and facilitates autophagic flux. Within the GATOR2 complex, WDR24 constitutes the catalytic subunit that mediates 'Lys-6'-linked ubiquitination of NPRL2. The polypeptide is GATOR2 complex protein WDR24 (Xenopus laevis (African clawed frog)).